A 181-amino-acid chain; its full sequence is Protein Ves (181 aa).

It belongs to the Ves family.

The protein is Protein Ves of Cronobacter sakazakii (strain ATCC BAA-894) (Enterobacter sakazakii).